The following is a 257-amino-acid chain: NAD kinase (257 aa).

Asp46 serves as the catalytic Proton acceptor. NAD(+)-binding positions include 46–47, 116–117, Asp146, Ala154, 157–162, and Asn218; these read DG, NE, and TAYNLS.

The protein belongs to the NAD kinase family. Requires a divalent metal cation as cofactor.

It localises to the cytoplasm. It carries out the reaction NAD(+) + ATP = ADP + NADP(+) + H(+). In terms of biological role, involved in the regulation of the intracellular balance of NAD and NADP, and is a key enzyme in the biosynthesis of NADP. Catalyzes specifically the phosphorylation on 2'-hydroxyl of the adenosine moiety of NAD to yield NADP. This chain is NAD kinase, found in Brucella suis biovar 1 (strain 1330).